A 120-amino-acid polypeptide reads, in one-letter code: Large ribosomal subunit protein uL18 (120 aa).

The protein belongs to the universal ribosomal protein uL18 family. In terms of assembly, part of the 50S ribosomal subunit; part of the 5S rRNA/L5/L18/L25 subcomplex. Contacts the 5S and 23S rRNAs.

Its function is as follows. This is one of the proteins that bind and probably mediate the attachment of the 5S RNA into the large ribosomal subunit, where it forms part of the central protuberance. This chain is Large ribosomal subunit protein uL18, found in Staphylococcus haemolyticus (strain JCSC1435).